Consider the following 448-residue polypeptide: Probable xyloglucan 6-xylosyltransferase 1 (448 aa).

The Cytoplasmic segment spans residues 1-19; it reads MWVAERVVGERRMREIQRF. Residues 20 to 42 form a helical; Signal-anchor for type II membrane protein membrane-spanning segment; sequence ARNAKLTVVCLLLTVVVLRGTVG. Over 43–448 the chain is Lumenal; the sequence is AGKFGTPQQD…AFKAMKTTST (406 aa). A disordered region spans residues 71–113; that stretch reads HHDALSRGGGSSSSSGRAAQRDDEPDPPPRTLRDPPYTLGPKI. Residue N421 is glycosylated (N-linked (GlcNAc...) asparagine).

It belongs to the glycosyltransferase 34 family.

It is found in the golgi apparatus membrane. It carries out the reaction Transfers an alpha-D-xylosyl residue from UDP-D-xylose to a glucose residue in xyloglucan, forming an alpha-(1-&gt;6)-D-xylosyl-D-glucose linkage.. Probable xyloglucan xylosyltransferase involved in the biosynthesis of xyloglucan in roots. The polypeptide is Probable xyloglucan 6-xylosyltransferase 1 (Oryza sativa subsp. indica (Rice)).